A 76-amino-acid polypeptide reads, in one-letter code: Putative membrane protein insertion efficiency factor (76 aa).

The protein belongs to the UPF0161 family.

It localises to the cell inner membrane. Functionally, could be involved in insertion of integral membrane proteins into the membrane. This is Putative membrane protein insertion efficiency factor from Anaeromyxobacter dehalogenans (strain 2CP-C).